The sequence spans 297 residues: Ribosomal protein L11 methyltransferase (297 aa).

Positions 152, 173, 195, and 234 each coordinate S-adenosyl-L-methionine.

Belongs to the methyltransferase superfamily. PrmA family.

Its subcellular location is the cytoplasm. The enzyme catalyses L-lysyl-[protein] + 3 S-adenosyl-L-methionine = N(6),N(6),N(6)-trimethyl-L-lysyl-[protein] + 3 S-adenosyl-L-homocysteine + 3 H(+). In terms of biological role, methylates ribosomal protein L11. This chain is Ribosomal protein L11 methyltransferase, found in Cupriavidus taiwanensis (strain DSM 17343 / BCRC 17206 / CCUG 44338 / CIP 107171 / LMG 19424 / R1) (Ralstonia taiwanensis (strain LMG 19424)).